A 766-amino-acid polypeptide reads, in one-letter code: AMP deaminase 3 (766 aa).

Phosphoserine is present on residues Ser-85 and Ser-107. The segment at 89 to 114 is disordered; the sequence is QMPTQQDWKGPPTASPAMSPATPLVP. The span at 99–110 shows a compositional bias: low complexity; the sequence is PPTASPAMSPAT. Zn(2+) contacts are provided by His-316 and His-318. Substrate-binding positions include His-318 and 387 to 392; that span reads KFNSKY. Position 585 (His-585) interacts with Zn(2+). Substrate is bound at residue Glu-588. His-607 serves as the catalytic Proton acceptor. A Zn(2+)-binding site is contributed by Asp-662. 663–666 contacts substrate; the sequence is DPMQ.

It belongs to the metallo-dependent hydrolases superfamily. Adenosine and AMP deaminases family. In terms of assembly, homotetramer. The cofactor is Zn(2+). As to expression, found in heart, lung brain, spleen, kidney and to a lesser extent in liver.

The catalysed reaction is AMP + H2O + H(+) = IMP + NH4(+). The protein operates within purine metabolism; IMP biosynthesis via salvage pathway; IMP from AMP: step 1/1. AMP deaminase plays a critical role in energy metabolism. The sequence is that of AMP deaminase 3 from Mus musculus (Mouse).